Consider the following 150-residue polypeptide: Ribonuclease K6 (150 aa).

The signal sequence occupies residues 1 to 23; the sequence is MVLCFPLLLLLLVLWGPVCPLHA. His38 acts as the Proton acceptor in catalysis. 4 cysteine pairs are disulfide-bonded: Cys46-Cys104, Cys60-Cys114, Cys78-Cys129, and Cys85-Cys92. Residue Asn55 is glycosylated (N-linked (GlcNAc...) asparagine). Substrate-binding positions include 61–65 and Lys86; that span reads KHQNT. A glycan (N-linked (GlcNAc...) asparagine) is linked at Asn100. Arg105 serves as a coordination point for substrate. His145 serves as the catalytic Proton donor.

It belongs to the pancreatic ribonuclease family. Interacts (via N-terminus) with bacterial lipopolysaccharide (LPS).

The protein localises to the secreted. It is found in the lysosome. It localises to the cytoplasmic granule. In terms of biological role, ribonuclease which shows a preference for the pyrimidines uridine and cytosine. Has potent antibacterial activity against a range of Gram-positive and Gram-negative bacteria, including P.aeruginosa, A.baumanii, M.luteus, S.aureus, E.faecalis, E.faecium, S.saprophyticus and E.coli. Causes loss of bacterial membrane integrity, and also promotes agglutination of Gram-negative bacteria. Probably contributes to urinary tract sterility. Bactericidal activity is independent of RNase activity. This Gorilla gorilla gorilla (Western lowland gorilla) protein is Ribonuclease K6 (RNASE6).